Here is a 552-residue protein sequence, read N- to C-terminus: Macrophage colony-stimulating factor 1 (552 aa).

Positions 1–32 (MTARGAAGRCPSSTWLGSRLLLVCLLMSRSIA) are cleaved as a signal peptide. The Extracellular segment spans residues 33–492 (KEVSEHCSHM…EGSSDPQIPE (460 aa)). Intrachain disulfides connect Cys-39–Cys-122, Cys-80–Cys-171, and Cys-134–Cys-178. 3 N-linked (GlcNAc...) asparagine glycosylation sites follow: Asn-107, Asn-154, and Asn-172. Over residues 197 to 207 (TPSSDPASASP) the composition is skewed to low complexity. The interval 197–293 (TPSSDPASAS…GGPVPGVEDI (97 aa)) is disordered. The segment covering 254 to 267 (PRSTCQTLESTEQP) has biased composition (polar residues). Basic and acidic residues predominate over residues 268 to 278 (NHGDRLTEDSQ). Residue Ser-308 is glycosylated (O-linked (Xyl...) (chondroitin sulfate) serine). 2 disordered regions span residues 321 to 412 (KFSP…RVSN) and 439 to 465 (GKRS…ARPV). Basic and acidic residues-rich tracts occupy residues 350 to 364 (STED…DRPL), 382 to 396 (EKTD…DHQE), and 439 to 450 (GKRSTRDRRSPA). Thr-360 carries an O-linked (GalNAc...) threonine glycan. The helical transmembrane segment at 493 to 515 (SVFHLLVPGIILVLLTVGGLLFY) threads the bilayer. Topologically, residues 516-552 (KWKWRSHRDPQTLDSSVGRPEDSSLTQDEDRQVELPV) are cytoplasmic. A disordered region spans residues 525 to 552 (PQTLDSSVGRPEDSSLTQDEDRQVELPV). Residues 543-552 (DEDRQVELPV) are compositionally biased toward basic and acidic residues.

As to quaternary structure, homodimer or heterodimer; disulfide-linked. Likely to exist in multiple forms: homodimer consisting of 2 identical 150-200 kDa proteoglycan subunits, heterodimer consisting of a 150-200 kDa proteoglycan subunit and a truncated 43 kDa subunit, and homodimer consisting of 2 identical 43 kDa subunits. Interacts with CSF1R. N-glycosylated. In terms of processing, O-glycosylated; contains chondroitin sulfate.

The protein localises to the cell membrane. The protein resides in the secreted. Its subcellular location is the extracellular space. Its function is as follows. Cytokine that plays an essential role in the regulation of survival, proliferation and differentiation of hematopoietic precursor cells, especially mononuclear phagocytes, such as macrophages and monocytes. Promotes the release of pro-inflammatory chemokines, and thereby plays an important role in innate immunity and in inflammatory processes. Plays an important role in the regulation of osteoclast proliferation and differentiation, the regulation of bone resorption, and is required for normal bone development. Required for normal male and female fertility. Promotes reorganization of the actin cytoskeleton, regulates formation of membrane ruffles, cell adhesion and cell migration. Plays a role in lipoprotein clearance. The chain is Macrophage colony-stimulating factor 1 (Csf1) from Mus musculus (Mouse).